A 443-amino-acid chain; its full sequence is Xaa-Pro dipeptidase (443 aa).

Mn(2+) is bound by residues Asp-246, Asp-257, His-339, Glu-384, and Glu-423.

This sequence belongs to the peptidase M24B family. Bacterial-type prolidase subfamily. The cofactor is Mn(2+).

The catalysed reaction is Xaa-L-Pro dipeptide + H2O = an L-alpha-amino acid + L-proline. Functionally, splits dipeptides with a prolyl residue in the C-terminal position. This is Xaa-Pro dipeptidase from Citrobacter koseri (strain ATCC BAA-895 / CDC 4225-83 / SGSC4696).